A 132-amino-acid chain; its full sequence is 3'-dehydrocarminate deglycosidase beta subunit (132 aa).

This sequence belongs to the C-glycoside deglycosidase beta subunit family. In terms of assembly, heterodimer composed of an alpha subunit (CarB) and a beta subunit (CarC). Requires Mg(2+) as cofactor.

It catalyses the reaction 3'-dehydrocarminate + H(+) = kermesate + 1,5-anhydro-D-erythro-hex-1-en-3-ulose. Its activity is regulated as follows. Activity is strongly reduced in the presence of chelating agents. Functionally, carbon-carbon bond-cleaving enzyme which participates in a carminate degradation pathway. Cleaves the C-C bond in 3'-dehydrocarminate to form kermesate. Also shows weak activity with other C-glycosides, such as 3''-dehydropuerarin (3''-oxo-puerarin), 3''-dehydroisoorientin (3''-oxo-homoorientin) and 3'-dehydromangiferin (3'-oxo-mangiferin). This Microbacterium sp protein is 3'-dehydrocarminate deglycosidase beta subunit.